The following is a 1733-amino-acid chain: Desertorin synthase (1733 aa).

Residues 21-358 (RIRQQSRSSR…HAPTRDLTEW (338 aa)) are N-terminal acylcarrier protein transacylase domain (SAT). The Ketosynthase family 3 (KS3) domain occupies 372–799 (DCRIAVVGMS…GGNTALLLEE (428 aa)). Residues 406–422 (HVPPDRYDVQSHTDPTG) are compositionally biased toward basic and acidic residues. A disordered region spans residues 406-429 (HVPPDRYDVQSHTDPTGRRMNTSQ). Catalysis depends on for beta-ketoacyl synthase activity residues cysteine 544, histidine 679, and histidine 718. The tract at residues 903-1211 (FVFSGQGSFY…DNWHTLAGSM (309 aa)) is malonyl-CoA:ACP transacylase (MAT) domain. An N-terminal hotdog fold region spans residues 1288–1420 (HRIVEETFWA…GTVSVGNAAS (133 aa)). The region spanning 1288–1598 (HRIVEETFWA…LRPLPRILMH (311 aa)) is the PKS/mFAS DH domain. A product template (PT) domain region spans residues 1299 to 1594 (GGRVVMESNV…AGVTLRPLPR (296 aa)). Histidine 1320 serves as the catalytic Proton acceptor; for dehydratase activity. A C-terminal hotdog fold region spans residues 1448-1598 (ADRLTRDTVY…LRPLPRILMH (151 aa)). Catalysis depends on aspartate 1506, which acts as the Proton donor; for dehydratase activity. The interval 1608-1659 (HNWGNSPAKPEAKPEMVPTSGSSSAAGSPSGSSAGPLSIPERLADPSETSFQ) is disordered. Positions 1627 to 1643 (SGSSSAAGSPSGSSAGP) are enriched in low complexity. Residues 1659-1733 (QSKASKVSKA…TVGEVKRQML (75 aa)) enclose the Carrier domain. At serine 1696 the chain carries O-(pantetheine 4'-phosphoryl)serine.

Requires pantetheine 4'-phosphate as cofactor.

It functions in the pathway secondary metabolite biosynthesis. Functionally, non-reducing polyketide synthase; part of the gene cluster that mediates the biosynthesis of the bicoumarin desertorin. The non-reducing polyketide synthase desS first catalyzes the formation of the pentaketidic 4,7-dihydroxy-5-methylcoumarin from acetyl coenzyme A and 4 malonyl coenzyme A molecules. Further O-methylation by desB leads to the formation of 7-demethylsiderin. Then, an oxidative phenol coupling catalyzed by the cytochrome P450 monooxygenase desC forms the 6,8'-dimer M-desertorin A via dimerization the monomeric precursor, 7-demethylsiderin. M-desertorin A is further converted to M-desertorin C. The chain is Desertorin synthase from Aspergillus desertorum (Emericella desertorum).